A 593-amino-acid chain; its full sequence is MTNHQKVGTLYKRLLLQVKHLMAFSAFGCYRKYIFLSADASMIYLINPILNYGFGPGGGITKQSATILMLMGVGMVGFIALRSVGSFVSQYFIGSLGQKVVYKFRKDIYKRLMDLPASFFDKHSTGQIISRLLYNVDQVTEATSTAIITVVQDGTFVIGLIVVMFVSSWQLSLFLIVVGPFLGLFISIINKKFRNLSRNTQSSMGNVTHTAEETIRNYKEIRIFGAQQKQQNKFFKNLDYTYSQQIRTIALDALTSPVIQIIASLVLAFSLFTIAIFGTNDGGGSSWLTAGSFASFFAAAAAILKPIKNLTKVNVVIQKAVAATEDIFYILDYPAEKETGSKELAKVDGNVTIKDLSFAFGEHKVLSGVSVDIKAGQTVAFVGKSGSGKTTLTSIISRFYTQHKGEILLDGVDTRELTLENLRSHLSIVSQNVHLFDDTVYNNIAFGLSREVSEDEVIDALKRANAYEFVQELSDGIHTNIGNNGSKLSGGQRQRISIARALLKNAPVLIFDEATSALDNESERVVQQALESLTESCTTIVIAHRLSTVENADKIVVMDGGKVVESGKHQELLEQGGLYTGSINRDFNSTYAR.

6 consecutive transmembrane segments (helical) span residues 33–55 (YIFLSADASMIYLINPILNYGFG), 67–87 (ILMLMGVGMVGFIALRSVGSF), 146–166 (AIITVVQDGTFVIGLIVVMFV), 169–189 (WQLSLFLIVVGPFLGLFISII), 258–278 (VIQIIASLVLAFSLFTIAIFG), and 284–304 (GSSWLTAGSFASFFAAAAAIL). In terms of domain architecture, ABC transmembrane type-1 spans 38 to 319 (ADASMIYLIN…LTKVNVVIQK (282 aa)). Positions 351–585 (VTIKDLSFAF…GGLYTGSINR (235 aa)) constitute an ABC transporter domain. 383 to 390 (GKSGSGKT) provides a ligand contact to ATP.

This sequence belongs to the ABC transporter superfamily. Lipid exporter (TC 3.A.1.106) family. As to quaternary structure, homodimer.

The protein localises to the cell membrane. It catalyses the reaction ATP + H2O + lipid A-core oligosaccharideSide 1 = ADP + phosphate + lipid A-core oligosaccharideSide 2.. In terms of biological role, involved in lipopolysaccharide (LPS) biosynthesis. Translocates lipid A-core from the inner to the outer leaflet of the inner membrane. Transmembrane domains (TMD) form a pore in the inner membrane and the ATP-binding domain (NBD) is responsible for energy generation. The chain is ATP-dependent lipid A-core flippase from Francisella novicida.